We begin with the raw amino-acid sequence, 435 residues long: ATP-dependent RNA helicase SUB2 (435 aa).

The disordered stretch occupies residues 1 to 40 (MSHEGQEELLDYSDSEEIAVPTTTAPSAAAGEGANDKEAD). The segment covering 7–17 (EELLDYSDSEE) has biased composition (acidic residues). Positions 19–33 (AVPTTTAPSAAAGEG) are enriched in low complexity. Positions 51–79 (TGFRDFLLKPELLRAIGDCGFEHPSEVQQ) match the Q motif motif. A Helicase ATP-binding domain is found at 82–257 (IPQSILGTDV…KKFMQNPLEI (176 aa)). 95-102 (AKSGLGKT) lines the ATP pocket. A DECD box motif is present at residues 204 to 207 (DECD). One can recognise a Helicase C-terminal domain in the interval 269–430 (GLQQYYIKLD…EFPEEGVDPS (162 aa)).

This sequence belongs to the DEAD box helicase family. DECD subfamily.

It is found in the nucleus. It catalyses the reaction ATP + H2O = ADP + phosphate + H(+). Its function is as follows. ATP-binding RNA helicase involved in transcription elongation and required for the export of mRNA out of the nucleus. SUB2 also plays a role in pre-mRNA splicing and spliceosome assembly. May be involved in rDNA and telomeric silencing, and maintenance of genome integrity. This Debaryomyces hansenii (strain ATCC 36239 / CBS 767 / BCRC 21394 / JCM 1990 / NBRC 0083 / IGC 2968) (Yeast) protein is ATP-dependent RNA helicase SUB2 (SUB2).